The following is a 195-amino-acid chain: Antigenic thaumatin-like protein ARB_01183 (195 aa).

An N-terminal signal peptide occupies residues 1–22; the sequence is MHSNTAVIALSALAALVPAALA. Intrachain disulfides connect cysteine 125–cysteine 153 and cysteine 130–cysteine 137. Residues 171–195 form a disordered region; that stretch reads GPKKMFKPVQEKAANRPRHPHARPE. Basic residues predominate over residues 185–195; sequence NRPRHPHARPE.

This sequence belongs to the thaumatin family.

The protein resides in the secreted. Functionally, might be involved in the inhibition of growth of fungal competitors and pathogenicity. The polypeptide is Antigenic thaumatin-like protein ARB_01183 (Arthroderma benhamiae (strain ATCC MYA-4681 / CBS 112371) (Trichophyton mentagrophytes)).